The primary structure comprises 221 residues: Stromal cell-derived factor 2-like protein 1 (221 aa).

The N-terminal stretch at 1 to 28 (MWSAGSGRAAGPALLGILLALSLSGGRA) is a signal peptide. MIR domains lie at 33-87 (AGLV…IRGG), 95-150 (GSPV…VRCS), and 151-205 (GQHW…AMEG). The Prevents secretion from ER signature appears at 218–221 (HDEL).

Its subcellular location is the endoplasmic reticulum lumen. The chain is Stromal cell-derived factor 2-like protein 1 (SDF2L1) from Bos taurus (Bovine).